A 72-amino-acid chain; its full sequence is Large ribosomal subunit protein uL29 (72 aa).

It belongs to the universal ribosomal protein uL29 family.

This chain is Large ribosomal subunit protein uL29, found in Prochlorococcus marinus (strain MIT 9515).